A 271-amino-acid polypeptide reads, in one-letter code: Formamidopyrimidine-DNA glycosylase (271 aa).

Residue P2 is the Schiff-base intermediate with DNA of the active site. E3 functions as the Proton donor in the catalytic mechanism. Catalysis depends on K58, which acts as the Proton donor; for beta-elimination activity. H92, R111, and R152 together coordinate DNA. Residues 237–271 form an FPG-type zinc finger; sequence YVYGKVQKPCRICNNIITLIRQNGRSTYFCNACQN. R261 acts as the Proton donor; for delta-elimination activity in catalysis.

It belongs to the FPG family. In terms of assembly, monomer. Zn(2+) is required as a cofactor.

The catalysed reaction is Hydrolysis of DNA containing ring-opened 7-methylguanine residues, releasing 2,6-diamino-4-hydroxy-5-(N-methyl)formamidopyrimidine.. It catalyses the reaction 2'-deoxyribonucleotide-(2'-deoxyribose 5'-phosphate)-2'-deoxyribonucleotide-DNA = a 3'-end 2'-deoxyribonucleotide-(2,3-dehydro-2,3-deoxyribose 5'-phosphate)-DNA + a 5'-end 5'-phospho-2'-deoxyribonucleoside-DNA + H(+). In terms of biological role, involved in base excision repair of DNA damaged by oxidation or by mutagenic agents. Acts as a DNA glycosylase that recognizes and removes damaged bases. Has a preference for oxidized purines, such as 7,8-dihydro-8-oxoguanine (8-oxoG). Has AP (apurinic/apyrimidinic) lyase activity and introduces nicks in the DNA strand. Cleaves the DNA backbone by beta-delta elimination to generate a single-strand break at the site of the removed base with both 3'- and 5'-phosphates. The chain is Formamidopyrimidine-DNA glycosylase from Wolbachia pipientis subsp. Culex pipiens (strain wPip).